The following is a 306-amino-acid chain: Putative lipid kinase Sca_1050 (306 aa).

Residues 3-139 (QHFHRGILFY…FDVLKVNDTY (137 aa)) enclose the DAGKc domain. Residues Ser-44, 74–80 (GDGTVNE), and Thr-101 contribute to the ATP site. 3 residues coordinate Mg(2+): Ser-220, Asp-223, and Glu-225. Glu-281 functions as the Proton acceptor in the catalytic mechanism.

It belongs to the diacylglycerol/lipid kinase family. Requires Mg(2+) as cofactor.

Its function is as follows. May catalyze the ATP-dependent phosphorylation of lipids other than diacylglycerol (DAG). In Staphylococcus carnosus (strain TM300), this protein is Putative lipid kinase Sca_1050.